We begin with the raw amino-acid sequence, 505 residues long: 2,3-bisphosphoglycerate-independent phosphoglycerate mutase (505 aa).

Asp-12 and Ser-62 together coordinate Mn(2+). Ser-62 serves as the catalytic Phosphoserine intermediate. Residues His-123, 153–154 (RD), Arg-185, Arg-191, 257–260 (RPDR), and Lys-330 each bind substrate. 5 residues coordinate Mn(2+): Asp-397, His-401, Asp-438, His-439, and His-456.

This sequence belongs to the BPG-independent phosphoglycerate mutase family. Monomer. The cofactor is Mn(2+).

The enzyme catalyses (2R)-2-phosphoglycerate = (2R)-3-phosphoglycerate. Its pathway is carbohydrate degradation; glycolysis; pyruvate from D-glyceraldehyde 3-phosphate: step 3/5. Catalyzes the interconversion of 2-phosphoglycerate and 3-phosphoglycerate. In Staphylococcus epidermidis (strain ATCC 35984 / DSM 28319 / BCRC 17069 / CCUG 31568 / BM 3577 / RP62A), this protein is 2,3-bisphosphoglycerate-independent phosphoglycerate mutase.